The sequence spans 124 residues: UPF0102 protein Haur_0145 (124 aa).

Belongs to the UPF0102 family.

This Herpetosiphon aurantiacus (strain ATCC 23779 / DSM 785 / 114-95) protein is UPF0102 protein Haur_0145.